We begin with the raw amino-acid sequence, 492 residues long: Cobyric acid synthase (492 aa).

The GATase cobBQ-type domain occupies 253 to 441 (VLKVIAPVYP…LHGLFDTPQA (189 aa)). The Nucleophile role is filled by Cys-334. His-433 is an active-site residue.

The protein belongs to the CobB/CobQ family. CobQ subfamily.

The protein operates within cofactor biosynthesis; adenosylcobalamin biosynthesis. In terms of biological role, catalyzes amidations at positions B, D, E, and G on adenosylcobyrinic A,C-diamide. NH(2) groups are provided by glutamine, and one molecule of ATP is hydrogenolyzed for each amidation. In Azoarcus sp. (strain BH72), this protein is Cobyric acid synthase.